We begin with the raw amino-acid sequence, 333 residues long: Catabolite control protein A (333 aa).

Positions 7 to 61 (ITIYDVAREAGVSMATVSRVVNGNKNVKENTRKKVLEVIDRLDYRPNAVARGLAS) constitute an HTH lacI-type domain. The H-T-H motif DNA-binding region spans 9 to 28 (IYDVAREAGVSMATVSRVVN).

In terms of biological role, global transcriptional regulator of carbon catabolite repression (CCR) and carbon catabolite activation (CCA), which ensures optimal energy usage under diverse conditions. The polypeptide is Catabolite control protein A (ccpA) (Streptococcus mutans serotype c (strain ATCC 700610 / UA159)).